We begin with the raw amino-acid sequence, 849 residues long: Villin-1 (849 aa).

5 Gelsolin-like repeats span residues 30 to 107 (IEKS…DKFL), 147 to 213 (RVTE…EDGK), 262 to 335 (VPVE…TVEF), 405 to 475 (QEQL…PEMF), and 527 to 566 (AIQV…DHNL). The segment at 739–849 (ETPERSLRKS…AVATGTPRRL (111 aa)) is disordered. 2 stretches are compositionally biased toward low complexity: residues 747–782 (KSSS…SAST) and 791–823 (PAAL…STPS).

Belongs to the villin/gelsolin family.

The protein resides in the cytoplasm. It localises to the cytoskeleton. Its function is as follows. Ca(2+)-independent actin-binding protein. Binds actin microfilaments (MFs). Involved in actin filament bundling, severing and capping. Caps the barbed end of actin filaments and protects them from disassembly. Promotes VLN3-mediated MF severing. This Oryza sativa subsp. indica (Rice) protein is Villin-1.